The sequence spans 469 residues: RuvB-like helicase 2 (469 aa).

Position 76 to 83 (76 to 83 (GPPSTGKT)) interacts with ATP.

The protein belongs to the RuvB family. In terms of assembly, may form heterododecamers with RVB1. Component of the SWR1 chromatin remodeling complex, the INO80 chromatin remodeling complex, and of the R2TP complex.

It is found in the nucleus. The catalysed reaction is ATP + H2O = ADP + phosphate + H(+). Its function is as follows. DNA helicase which participates in several chromatin remodeling complexes, including the SWR1 and the INO80 complexes. The SWR1 complex mediates the ATP-dependent exchange of histone H2A for the H2A variant HZT1 leading to transcriptional regulation of selected genes by chromatin remodeling. The INO80 complex remodels chromatin by shifting nucleosomes and is involved in DNA repair. Also involved in pre-rRNA processing. The sequence is that of RuvB-like helicase 2 (rvb2) from Aspergillus fumigatus (strain ATCC MYA-4609 / CBS 101355 / FGSC A1100 / Af293) (Neosartorya fumigata).